The following is a 55-amino-acid chain: Bowman-Birk type proteinase inhibitor B1 (55 aa).

Intrachain disulfides connect C6/C53, C12/C17, C26/C33, and C30/C45.

It belongs to the Bowman-Birk serine protease inhibitor family. In terms of tissue distribution, expressed in bulb (at protein level).

Functionally, serine protease inhibitor. Weakly inhibits trypsin (Ki = 167 nM). Does not inhibit bacterial subtilisin or mamallian chymotrypsin. The sequence is that of Bowman-Birk type proteinase inhibitor B1 from Hyacinthus orientalis (Common hyacinth).